Reading from the N-terminus, the 556-residue chain is Arginine--tRNA ligase (556 aa).

A 'HIGH' region motif is present at residues 132-142 (ANPTGDLHLGH).

This sequence belongs to the class-I aminoacyl-tRNA synthetase family. In terms of assembly, monomer.

It is found in the cytoplasm. It catalyses the reaction tRNA(Arg) + L-arginine + ATP = L-arginyl-tRNA(Arg) + AMP + diphosphate. The chain is Arginine--tRNA ligase from Listeria monocytogenes serotype 4b (strain F2365).